The chain runs to 130 residues: Small ribosomal subunit protein uS8 (130 aa).

The protein belongs to the universal ribosomal protein uS8 family. As to quaternary structure, part of the 30S ribosomal subunit. Contacts proteins S5 and S12.

Functionally, one of the primary rRNA binding proteins, it binds directly to 16S rRNA central domain where it helps coordinate assembly of the platform of the 30S subunit. This chain is Small ribosomal subunit protein uS8, found in Shewanella loihica (strain ATCC BAA-1088 / PV-4).